A 480-amino-acid polypeptide reads, in one-letter code: tRNA modification GTPase MnmE (480 aa).

(6S)-5-formyl-5,6,7,8-tetrahydrofolate is bound by residues arginine 20, glutamate 114, and lysine 154. Positions 250 to 406 (GLKLAIIGPP…ILKNIENIAE (157 aa)) constitute a TrmE-type G domain. Asparagine 260 lines the K(+) pocket. GTP-binding positions include 260 to 265 (NVGKSS), 279 to 285 (SNIAGTT), and 304 to 307 (DTAG). Serine 264 lines the Mg(2+) pocket. Positions 279, 281, and 284 each coordinate K(+). Residue threonine 285 participates in Mg(2+) binding. Lysine 480 serves as a coordination point for (6S)-5-formyl-5,6,7,8-tetrahydrofolate.

Belongs to the TRAFAC class TrmE-Era-EngA-EngB-Septin-like GTPase superfamily. TrmE GTPase family. As to quaternary structure, homodimer. Heterotetramer of two MnmE and two MnmG subunits. Requires K(+) as cofactor.

The protein localises to the cytoplasm. In terms of biological role, exhibits a very high intrinsic GTPase hydrolysis rate. Involved in the addition of a carboxymethylaminomethyl (cmnm) group at the wobble position (U34) of certain tRNAs, forming tRNA-cmnm(5)s(2)U34. The chain is tRNA modification GTPase MnmE from Rickettsia felis (strain ATCC VR-1525 / URRWXCal2) (Rickettsia azadi).